The following is a 310-amino-acid chain: Succinate dehydrogenase assembly factor 2, mitochondrial (310 aa).

Positions 35-48 (LKDGSDEASPEVKA) are enriched in basic and acidic residues. The segment at 35 to 67 (LKDGSDEASPEVKAHRANQANKAPNQFVPNTTS) is disordered. The span at 52–67 (NQANKAPNQFVPNTTS) shows a compositional bias: polar residues.

Belongs to the SDHAF2 family. As to quaternary structure, interacts with the flavoprotein subunit within the SDH catalytic dimer.

Its subcellular location is the mitochondrion matrix. Functionally, plays an essential role in the assembly of succinate dehydrogenase (SDH), an enzyme complex (also referred to as respiratory complex II) that is a component of both the tricarboxylic acid (TCA) cycle and the mitochondrial electron transport chain, and which couples the oxidation of succinate to fumarate with the reduction of ubiquinone (coenzyme Q) to ubiquinol. Required for flavinylation (covalent attachment of FAD) of the flavoprotein subunit of the SDH catalytic dimer. The chain is Succinate dehydrogenase assembly factor 2, mitochondrial from Penicillium rubens (strain ATCC 28089 / DSM 1075 / NRRL 1951 / Wisconsin 54-1255) (Penicillium chrysogenum).